The chain runs to 320 residues: MSMITERPVSDPAGQSVSATGDGAVGSRRDMRAVVAAYVALTKPRIVELLLVTTVPAMMLAHGGLPSLWLMAVVLVGGSLAAGAASVLNCYIDRDIDQVMRRTKRRPLPAHTVAPRNALIFGLVLATVSVTLLAVFTNALAAGLTLAAILYYDLVYTAWLKRTTTANTFWGGACGAAPVLIGWAAVTGSLAPAAWALFGVVFFWQMPHFYPLAMKYKDDYARAGIPMLPVVASTRRVNAEILVFAWLTVLVSLVTWPLGAGMGPIYGLPTLVVGVIFLVEAHRLCRRAARGEAVKPMRLFHWSTTYLTVVFAAVALDALI.

The segment at 1-24 (MSMITERPVSDPAGQSVSATGDGA) is disordered. The next 8 membrane-spanning stretches (helical) occupy residues 33 to 55 (AVVA…VTTV), 68 to 88 (LWLM…ASVL), 117 to 137 (NALI…AVFT), 140 to 160 (LAAG…TAWL), 183 to 203 (WAAV…VVFF), 241 to 261 (ILVF…LGAG), 262 to 282 (MGPI…VEAH), and 300 to 320 (FHWS…DALI).

This sequence belongs to the UbiA prenyltransferase family. Protoheme IX farnesyltransferase subfamily.

The protein resides in the cell membrane. It carries out the reaction heme b + (2E,6E)-farnesyl diphosphate + H2O = Fe(II)-heme o + diphosphate. It functions in the pathway porphyrin-containing compound metabolism; heme O biosynthesis; heme O from protoheme: step 1/1. Converts heme B (protoheme IX) to heme O by substitution of the vinyl group on carbon 2 of heme B porphyrin ring with a hydroxyethyl farnesyl side group. This is Protoheme IX farnesyltransferase from Salinispora tropica (strain ATCC BAA-916 / DSM 44818 / JCM 13857 / NBRC 105044 / CNB-440).